The chain runs to 2104 residues: 5'-3' DNA helicase ZGRF1 (2104 aa).

Polar residues predominate over residues 335–345 (SSPIHSSTVDG). The segment at 335–359 (SSPIHSSTVDGNDTERKPKAQEDDV) is disordered. A Phosphoserine modification is found at serine 336. Residues 347 to 356 (DTERKPKAQE) show a composition bias toward basic and acidic residues. 2 positions are modified to phosphoserine: serine 793 and serine 864. The Zn(2+) site is built by cysteine 1349, histidine 1351, cysteine 1374, and cysteine 1382. Residues 1349–1391 (CHHSQPAKLVMVKKEGPNKGRLFYTCDGPKADRCKFFKWLEDV) form a GRF-type zinc finger. Residues 2085 to 2104 (VEEKQKKKSEKEKSKDKSHS) are disordered.

As to quaternary structure, interacts with DNA repair protein RAD51; the interaction promotes RAD51 strand exchange activity. Also interacts with DNA repair proteins EXO1 and BRCA1; the interactions are increased following DNA damage induction.

The protein localises to the nucleus. The enzyme catalyses ATP + H2O = ADP + phosphate + H(+). It catalyses the reaction Couples ATP hydrolysis with the unwinding of duplex DNA at the replication fork by translocating in the 5'-3' direction. This creates two antiparallel DNA single strands (ssDNA). The leading ssDNA polymer is the template for DNA polymerase III holoenzyme which synthesizes a continuous strand.. In terms of biological role, 5'-3' DNA helicase which is recruited to sites of DNA damage and promotes repair of replication-blocking DNA lesions through stimulation of homologous recombination (HR). Promotes HR by directly stimulating RAD51-mediated strand exchange activity. Not required to load RAD51 at sites of DNA damage but promotes recombinational repair after RAD51 recruitment. Also promotes HR by positively regulating EXO1-mediated DNA end resection of double-strand breaks. Required for recruitment of replication protein RPA2 to DNA damage sites. Promotes the initiation of the G2/M checkpoint but not its maintenance. Catalyzes Holliday junction branch migration and dissociation of D-loops and DNA flaps. The chain is 5'-3' DNA helicase ZGRF1 (ZGRF1) from Homo sapiens (Human).